The primary structure comprises 745 residues: Arf-GAP with coiled-coil, ANK repeat and PH domain-containing protein 1 (745 aa).

In terms of domain architecture, BAR spans 1–226 (MTVKLDFEEC…RKELGGQLHQ (226 aa)). The tract at residues 1–382 (MTVKLDFEEC…RGLGQGSGHL (382 aa)) is required for formation of endosomal tubules when overexpressed with PIP5K1C. The PH domain maps to 265-360 (GLVMEGHLFK…WVSAVQSSIA (96 aa)). The 123-residue stretch at 405-527 (GHVAAQVQSV…KFLTKLPEIR (123 aa)) folds into the Arf-GAP domain. The required for interaction with GULP1 stretch occupies residues 405–745 (GHVAAQVQSV…SRRSHDLHTL (341 aa)). The C4-type zinc finger occupies 420 to 443 (CCDCREPAPEWASINLGVTLCIQC). Tyrosine 485 is subject to 3'-nitrotyrosine. Residues 525-567 (EIRGRRGGRGPPRGHPPVPPKPGLIRPKPGSFRSKPEPPSEDL) form a prevents interaction with ITGB1 when S-554 is not phosphorylated region. The disordered stretch occupies residues 525 to 569 (EIRGRRGGRGPPRGHPPVPPKPGLIRPKPGSFRSKPEPPSEDLQS). Positions 537–546 (RGHPPVPPKP) are enriched in pro residues. At serine 555 the chain carries Phosphoserine; by PKB. 3 ANK repeats span residues 607-640 (ENAT…NVNQ), 644-673 (QGRG…DLGV), and 677-707 (EGRD…EADA).

Banana-shaped homodimer laterally assembling into tetramers, the tetramers further pack helically onto the membrane. Interacts with GTP-bound ARF6. Interacts with third cytoplasmic loop of SLC2A4/GLUT4. Interacts with CLTC. Interacts with GULP1. Forms a complex with GDP-bound ARF6 and GULP1. Interacts with ITGB1; required for ITGB1 recycling. Post-translationally, phosphorylation at Ser-555 by PKB is required for interaction with ITGB1, export of ITGB1 from recycling endosomes to the cell surface and ITGB1-dependent cell migration.

Its subcellular location is the recycling endosome membrane. Its activity is regulated as follows. GAP activity stimulated by phosphatidylinositol 4,5-bisphosphate (PIP2) and phosphatidic acid. In terms of biological role, GTPase-activating protein (GAP) for ADP ribosylation factor 6 (ARF6) required for clathrin-dependent export of proteins from recycling endosomes to trans-Golgi network and cell surface. Required for regulated export of ITGB1 from recycling endosomes to the cell surface and ITGB1-dependent cell migration. The protein is Arf-GAP with coiled-coil, ANK repeat and PH domain-containing protein 1 (ACAP1) of Bos taurus (Bovine).